A 237-amino-acid polypeptide reads, in one-letter code: Tetraspanin-8 (237 aa).

At Met1–Lys9 the chain is on the cytoplasmic side. The helical transmembrane segment at Tyr10 to Val33 threads the bilayer. Over Arg34 to Asp57 the chain is Extracellular. A helical transmembrane segment spans residues Ile58–Leu72. Residues Gly73–Cys83 lie on the Cytoplasmic side of the membrane. A helical membrane pass occupies residues Met84 to Phe109. Topologically, residues Lys110–Asn205 are extracellular. Residue Asn118 is glycosylated (N-linked (GlcNAc...) asparagine). The chain crosses the membrane as a helical span at residues Leu206–Leu230. Topologically, residues Tyr231–Lys237 are cytoplasmic.

The protein belongs to the tetraspanin (TM4SF) family. In terms of assembly, forms homooligomers. Interacts with MEP1B. Interacts with integrin alpha3/ITGA3. Interacts with RICTOR and MTOR. Interacts with ADAM17. Interacts with ECE1. As to expression, gastric, colon, rectal, and pancreatic carcinomas.

Its subcellular location is the cell membrane. Structural component of specialized membrane microdomains known as tetraspanin-enriched microdomains (TERMs), which act as platforms for receptor clustering and signaling. Participates thereby in diverse biological functions such as cell signal transduction, migration and protein trafficking. Promotes ADAM17-mediated TNF-alpha processing through recruitment of ADAM17 to tetraspanin-enriched micro-domains (TEMs). Forms a complex with RICTOR and integrin alpha3/ITGA3 to mediate mTORC2 activation and AKT1 phosphorylation leading to cell migration. Reduces apoptosis and autophagy induced by high glucose levels through forming a complex with mTOR and RICTOR. Contributes to the maintenance of intestinal epithelial barrier and plays a role in the regulation of intestine inflammation by switching interferon gamma receptor 1/IFNGR1 from clathrin-dependent to lipid raft-dependent endocytosis route to limit STAT1 activation magnitude and duration. Acts as a modulator of the endothelin axis by associating with endothelin converting enzyme ECE1 and regulating its activity of conversion of the endothelin-1 precursor to endothelin. This Homo sapiens (Human) protein is Tetraspanin-8 (TSPAN8).